Here is a 176-residue protein sequence, read N- to C-terminus: NAD(P)H-quinone oxidoreductase subunit J (176 aa).

It belongs to the complex I 30 kDa subunit family. As to quaternary structure, NDH-1 can be composed of about 15 different subunits; different subcomplexes with different compositions have been identified which probably have different functions.

Its subcellular location is the cellular thylakoid membrane. The catalysed reaction is a plastoquinone + NADH + (n+1) H(+)(in) = a plastoquinol + NAD(+) + n H(+)(out). It carries out the reaction a plastoquinone + NADPH + (n+1) H(+)(in) = a plastoquinol + NADP(+) + n H(+)(out). Functionally, NDH-1 shuttles electrons from an unknown electron donor, via FMN and iron-sulfur (Fe-S) centers, to quinones in the respiratory and/or the photosynthetic chain. The immediate electron acceptor for the enzyme in this species is believed to be plastoquinone. Couples the redox reaction to proton translocation, and thus conserves the redox energy in a proton gradient. Cyanobacterial NDH-1 also plays a role in inorganic carbon-concentration. This Prochlorococcus marinus subsp. pastoris (strain CCMP1986 / NIES-2087 / MED4) protein is NAD(P)H-quinone oxidoreductase subunit J.